The sequence spans 365 residues: Putative agmatine deiminase (365 aa).

Residue Cys-356 is the Amidino-cysteine intermediate of the active site.

This sequence belongs to the agmatine deiminase family.

The catalysed reaction is agmatine + H2O = N-carbamoylputrescine + NH4(+). The protein is Putative agmatine deiminase of Latilactobacillus sakei subsp. sakei (strain 23K) (Lactobacillus sakei subsp. sakei).